Here is a 908-residue protein sequence, read N- to C-terminus: 26S proteasome non-ATPase regulatory subunit 2 (908 aa).

Met1 carries the N-acetylmethionine modification. The tract at residues 1–52 is disordered; sequence MEEGGRDKAPLQPQQPPATSPGSGDEKPSGKERRDAGDKDKEQELSEEDKQL. Residues 24–52 are compositionally biased toward basic and acidic residues; the sequence is GDEKPSGKERRDAGDKDKEQELSEEDKQL. Ser29 and Ser147 each carry phosphoserine. Tyr194 is modified (phosphotyrosine). Phosphoserine is present on residues Ser361 and Ser363. PC repeat units lie at residues 409-442, 443-479, 480-514, 517-551, and 560-589; these read SAAA…YIKS, GALL…TMRL, GSIF…SMEV, VTAL…TELK, and LGLG…PFRS. Lys551 is subject to N6-acetyllysine. Residues 623 to 643 show a composition bias toward basic and acidic residues; sequence KEKEEDKDKKEKKDKDKKEAP. A disordered region spans residues 623–645; it reads KEKEEDKDKKEKKDKDKKEAPAD. 2 PC repeats span residues 692–723 and 742–757; these read LALA…EVSY and AAML…KDPN. Positions 708-903 are required for interaction with UBLCP1; the sequence is DTLSKFSHDA…LEGFVILRKN (196 aa).

The protein belongs to the proteasome subunit S2 family. In terms of assembly, component of the 19S proteasome regulatory particle complex. The 26S proteasome consists of a 20S core particle (CP) and two 19S regulatory subunits (RP). The regulatory particle is made of a lid composed of 9 subunits, a base containing 6 ATPases and few additional components including PSMD2. Interacts with RPGRIP1L. Interacts with CRY1 in a KDM8-dependent manner. Interacts (via C-terminus) with phosphatase UBLCP1 (via ubiquitin-like domain); the interaction recruits UBLCP1 to the 19S regulatory particle where it dephosphorylates 19S subunit PSMC2/RPT1 which impairs PSMC2 ATPase activity and disrupts 26S proteasome assembly.

Its function is as follows. Component of the 26S proteasome, a multiprotein complex involved in the ATP-dependent degradation of ubiquitinated proteins. This complex plays a key role in the maintenance of protein homeostasis by removing misfolded or damaged proteins, which could impair cellular functions, and by removing proteins whose functions are no longer required. Therefore, the proteasome participates in numerous cellular processes, including cell cycle progression, apoptosis, or DNA damage repair. Binds to the intracellular domain of tumor necrosis factor type 1 receptor. The binding domain of TRAP1 and TRAP2 resides outside the death domain of TNFR1. This is 26S proteasome non-ATPase regulatory subunit 2 (PSMD2) from Bos taurus (Bovine).